Reading from the N-terminus, the 307-residue chain is Ribonuclease Z (307 aa).

Zn(2+) is bound by residues H63, H65, D67, H68, H140, D211, and H269. D67 (proton acceptor) is an active-site residue.

It belongs to the RNase Z family. As to quaternary structure, homodimer. The cofactor is Zn(2+).

The catalysed reaction is Endonucleolytic cleavage of RNA, removing extra 3' nucleotides from tRNA precursor, generating 3' termini of tRNAs. A 3'-hydroxy group is left at the tRNA terminus and a 5'-phosphoryl group is left at the trailer molecule.. Functionally, zinc phosphodiesterase, which displays some tRNA 3'-processing endonuclease activity. Probably involved in tRNA maturation, by removing a 3'-trailer from precursor tRNA. The chain is Ribonuclease Z from Bacillus licheniformis (strain ATCC 14580 / DSM 13 / JCM 2505 / CCUG 7422 / NBRC 12200 / NCIMB 9375 / NCTC 10341 / NRRL NRS-1264 / Gibson 46).